The primary structure comprises 217 residues: Dual specificity phosphatase 29 (217 aa).

The Tyrosine-protein phosphatase domain occupies 46 to 194 (HVNEVWPNLY…LRELDIKLAL (149 aa)). A substrate-binding site is contributed by 138 to 145 (HCAMGRSR). The active-site Phosphocysteine intermediate is Cys139.

It belongs to the protein-tyrosine phosphatase family. Non-receptor class dual specificity subfamily.

Its subcellular location is the cytoplasm. It is found in the nucleus. The enzyme catalyses O-phospho-L-tyrosyl-[protein] + H2O = L-tyrosyl-[protein] + phosphate. It catalyses the reaction O-phospho-L-seryl-[protein] + H2O = L-seryl-[protein] + phosphate. It carries out the reaction O-phospho-L-threonyl-[protein] + H2O = L-threonyl-[protein] + phosphate. Dual specificity phosphatase able to dephosphorylate phosphotyrosine, phosphoserine and phosphothreonine residues within the same substrate, with a preference for phosphotyrosine as a substrate. Involved in the modulation of AMPK and MAPK1/2 signaling pathways. This chain is Dual specificity phosphatase 29 (DUSP29), found in Anolis carolinensis (Green anole).